The chain runs to 76 residues: Acyl carrier protein (76 aa).

The Carrier domain occupies 2–76 (SNIEERVIKV…QSAIDFVKSR (75 aa)). S37 bears the O-(pantetheine 4'-phosphoryl)serine mark.

The protein belongs to the acyl carrier protein (ACP) family. Post-translationally, 4'-phosphopantetheine is transferred from CoA to a specific serine of apo-ACP by AcpS. This modification is essential for activity because fatty acids are bound in thioester linkage to the sulfhydryl of the prosthetic group.

The protein localises to the cytoplasm. It functions in the pathway lipid metabolism; fatty acid biosynthesis. In terms of biological role, carrier of the growing fatty acid chain in fatty acid biosynthesis. This is Acyl carrier protein from Dichelobacter nodosus (strain VCS1703A).